Here is a 681-residue protein sequence, read N- to C-terminus: Fibulin-1 (681 aa).

Positions 1 to 17 (MDLYMIVLLSLCGLLRA) are cleaved as a signal peptide. Cystine bridges form between Cys-29/Cys-55, Cys-30/Cys-62, Cys-43/Cys-63, Cys-72/Cys-103, Cys-85/Cys-104, Cys-106/Cys-125, Cys-107/Cys-138, Cys-114/Cys-139, Cys-162/Cys-171, Cys-167/Cys-176, Cys-178/Cys-191, Cys-197/Cys-210, Cys-204/Cys-219, Cys-225/Cys-237, Cys-243/Cys-256, Cys-250/Cys-265, Cys-271/Cys-283, Cys-289/Cys-301, Cys-317/Cys-330, Cys-336/Cys-348, Cys-343/Cys-357, Cys-359/Cys-372, Cys-378/Cys-390, Cys-386/Cys-399, Cys-401/Cys-414, Cys-420/Cys-429, Cys-440/Cys-454, Cys-460/Cys-473, Cys-469/Cys-482, Cys-484/Cys-498, Cys-504/Cys-517, Cys-511/Cys-526, and Cys-531/Cys-553. Anaphylatoxin-like domains lie at 29-63 (CCED…EQCC), 68-107 (EDSI…CECC), and 108-139 (LLGS…RSCC). The EGF-like 1 domain maps to 158–192 (TEDQCRAAGCAQRCLNGTCSCLDGFKLKTDGKHCE). Asn-173 carries N-linked (GlcNAc...) asparagine glycosylation. The EGF-like 2; calcium-binding domain occupies 193-238 (DINECLLGPHHCVTGERCINTLGSYRCQREISCGTGYELTDNNKCK). One can recognise an EGF-like 3; calcium-binding domain in the interval 239 to 284 (DIDECDLGTHNCAAEMECQNTAGSFRCRPRMQCAAGFIQDALGSCI). Positions 285-331 (DINECVSVTALSRGQMCFNTVGSFICQRHSVTCGRGYHLNAEGTRCV) constitute an EGF-like 4; calcium-binding domain. One can recognise an EGF-like 5; calcium-binding domain in the interval 332 to 373 (DIDECAGPDNSCDGHGCINLVGSYRCECRTGFIFNSISRSCE). One can recognise an EGF-like 6; calcium-binding domain in the interval 374–415 (DIDECRNYPGRLCAHKCENILGSYKCSCTAGFKLADDGRNCD). The region spanning 416-455 (DVNECESSPCSQGCANVYGSYQSYCRRGYQLSDADGITCE) is the EGF-like 7; calcium-binding domain. Positions 456–499 (DIDECALPTGGHICSYRCHNTPGSFHCTCPASGYTLAANGRSCQ) constitute an EGF-like 8; calcium-binding domain. The EGF-like 9; calcium-binding domain occupies 500 to 554 (DIDECLTGTHSCSESESCFNIQGGFRCLSFDCPANYRRSGDTRPRVDRADIIRCV).

This sequence belongs to the fibulin family. Homomultimerizes and interacts with various extracellular matrix components such as FN1, LAMA1, NID, AGC1 and CSPG2.

Its subcellular location is the secreted. The protein resides in the extracellular space. It localises to the extracellular matrix. In terms of biological role, incorporated into fibronectin-containing matrix fibers. May play a role in cell adhesion and migration along protein fibers within the extracellular matrix (ECM). Could be important for certain developmental processes and contribute to the supramolecular organization of ECM architecture, in particular to those of basement membranes. The protein is Fibulin-1 (fbln1) of Danio rerio (Zebrafish).